A 35-amino-acid chain; its full sequence is Coenzyme PQQ synthesis protein A (35 aa).

The segment at residues 16 to 20 (EINMY) is a cross-link (pyrroloquinoline quinone (Glu-Tyr)).

It belongs to the PqqA family.

The protein operates within cofactor biosynthesis; pyrroloquinoline quinone biosynthesis. In terms of biological role, required for coenzyme pyrroloquinoline quinone (PQQ) biosynthesis. PQQ is probably formed by cross-linking a specific glutamate to a specific tyrosine residue and excising these residues from the peptide. The polypeptide is Coenzyme PQQ synthesis protein A (Roseobacter denitrificans (strain ATCC 33942 / OCh 114) (Erythrobacter sp. (strain OCh 114))).